A 346-amino-acid chain; its full sequence is Uroporphyrinogen decarboxylase (346 aa).

Substrate-binding positions include 21-25 (RQAGR), Phe40, Asp71, Tyr146, Ser201, and His316.

It belongs to the uroporphyrinogen decarboxylase family. Homodimer.

The protein resides in the cytoplasm. The catalysed reaction is uroporphyrinogen III + 4 H(+) = coproporphyrinogen III + 4 CO2. It participates in porphyrin-containing compound metabolism; protoporphyrin-IX biosynthesis; coproporphyrinogen-III from 5-aminolevulinate: step 4/4. Functionally, catalyzes the decarboxylation of four acetate groups of uroporphyrinogen-III to yield coproporphyrinogen-III. The polypeptide is Uroporphyrinogen decarboxylase (Rickettsia felis (strain ATCC VR-1525 / URRWXCal2) (Rickettsia azadi)).